The sequence spans 114 residues: Flagellar hook-basal body complex protein FliE (114 aa).

It belongs to the FliE family.

The protein resides in the bacterial flagellum basal body. The chain is Flagellar hook-basal body complex protein FliE from Burkholderia cenocepacia (strain ATCC BAA-245 / DSM 16553 / LMG 16656 / NCTC 13227 / J2315 / CF5610) (Burkholderia cepacia (strain J2315)).